The chain runs to 427 residues: Glutamate-1-semialdehyde 2,1-aminomutase (427 aa).

Lys265 bears the N6-(pyridoxal phosphate)lysine mark.

The protein belongs to the class-III pyridoxal-phosphate-dependent aminotransferase family. HemL subfamily. As to quaternary structure, homodimer. It depends on pyridoxal 5'-phosphate as a cofactor.

The protein resides in the cytoplasm. The enzyme catalyses (S)-4-amino-5-oxopentanoate = 5-aminolevulinate. It functions in the pathway porphyrin-containing compound metabolism; protoporphyrin-IX biosynthesis; 5-aminolevulinate from L-glutamyl-tRNA(Glu): step 2/2. The chain is Glutamate-1-semialdehyde 2,1-aminomutase from Pseudomonas putida (strain GB-1).